The primary structure comprises 230 residues: 2,3-bisphosphoglycerate-dependent phosphoglycerate mutase (230 aa).

Substrate is bound by residues 8-15 (RHGQSIWN), 21-22 (TG), R60, 87-90 (ERHY), K98, and 114-115 (RR). Catalysis depends on H9, which acts as the Tele-phosphohistidine intermediate. Residue E87 is the Proton donor/acceptor of the active site. Positions 117-143 (YDTPPPALDAEDERHPRHDPRYAGLDP) are disordered. Residues 128–137 (DERHPRHDPR) are compositionally biased toward basic and acidic residues. 183-184 (GN) contacts substrate.

This sequence belongs to the phosphoglycerate mutase family. BPG-dependent PGAM subfamily. Homodimer.

The catalysed reaction is (2R)-2-phosphoglycerate = (2R)-3-phosphoglycerate. Its pathway is carbohydrate degradation; glycolysis; pyruvate from D-glyceraldehyde 3-phosphate: step 3/5. Functionally, catalyzes the interconversion of 2-phosphoglycerate and 3-phosphoglycerate. In Halorhodospira halophila (strain DSM 244 / SL1) (Ectothiorhodospira halophila (strain DSM 244 / SL1)), this protein is 2,3-bisphosphoglycerate-dependent phosphoglycerate mutase.